Consider the following 500-residue polypeptide: Amino-acid acetyltransferase, mitochondrial (500 aa).

The N-terminal 19 residues, 1–19, are a transit peptide targeting the mitochondrion; it reads MQKPSLSQDLIWILKSVQS. The N-acetyltransferase domain occupies 336-496; the sequence is FLGPKCLTDG…YMSVIDKIQP (161 aa).

The protein belongs to the acetyltransferase family.

It localises to the mitochondrion. It catalyses the reaction L-glutamate + acetyl-CoA = N-acetyl-L-glutamate + CoA + H(+). It participates in amino-acid biosynthesis; L-arginine biosynthesis; N(2)-acetyl-L-ornithine from L-glutamate: step 1/4. N-acetylglutamate synthase involved in arginine biosynthesis. The polypeptide is Amino-acid acetyltransferase, mitochondrial (arg6) (Schizosaccharomyces pombe (strain 972 / ATCC 24843) (Fission yeast)).